A 143-amino-acid chain; its full sequence is Hemoglobin subunit alpha (143 aa).

The Globin domain maps to valine 2–arginine 143. The residue at position 4 (serine 4) is a Phosphoserine. Residue lysine 8 is modified to N6-succinyllysine. Threonine 9 carries the phosphothreonine modification. The residue at position 12 (lysine 12) is an N6-succinyllysine. The residue at position 17 (lysine 17) is an N6-acetyllysine; alternate. Lysine 17 bears the N6-succinyllysine; alternate mark. Position 25 is a phosphotyrosine (tyrosine 25). Serine 36 is subject to Phosphoserine. The residue at position 41 (lysine 41) is an N6-succinyllysine. At serine 51 the chain carries Phosphoserine. Histidine 60 is an O2 binding site. Histidine 89 serves as a coordination point for heme b. Position 104 is a phosphoserine (serine 104). Threonine 110 is modified (phosphothreonine). Serine 126 bears the Phosphoserine mark. Threonine 136 is modified (phosphothreonine). At serine 140 the chain carries Phosphoserine.

The protein belongs to the globin family. In terms of assembly, heterotetramer of two alpha chains and two beta chains. In terms of tissue distribution, red blood cells.

Involved in oxygen transport from the lung to the various peripheral tissues. Functionally, hemopressin acts as an antagonist peptide of the cannabinoid receptor CNR1. Hemopressin-binding efficiently blocks cannabinoid receptor CNR1 and subsequent signaling. This chain is Hemoglobin subunit alpha (HBA), found in Pipistrellus abramus (Japanese pipistrelle).